Consider the following 481-residue polypeptide: Cysteine--tRNA ligase (481 aa).

Cys27 is a Zn(2+) binding site. The 'HIGH' region signature appears at 29–39; that stretch reads PTVYNYAHIGN. The Zn(2+) site is built by Cys222, His247, and Glu251. Residues 279 to 283 carry the 'KMSKS' region motif; the sequence is KMSKS. Residue Lys282 participates in ATP binding.

The protein belongs to the class-I aminoacyl-tRNA synthetase family. Monomer. Requires Zn(2+) as cofactor.

The protein localises to the cytoplasm. It catalyses the reaction tRNA(Cys) + L-cysteine + ATP = L-cysteinyl-tRNA(Cys) + AMP + diphosphate. The protein is Cysteine--tRNA ligase of Borrelia turicatae (strain 91E135).